The chain runs to 97 residues: ESAT-6-like protein EsxA (97 aa).

It belongs to the WXG100 family. ESAT-6 subfamily. In terms of assembly, forms a tight 1:1 complex with EsxB. Forms a complex with EccC and EsxB, probably wholly mediated by EsxB.

The protein localises to the secreted. In terms of biological role, may help regulate assembly and function of the type VII secretion system (T7SS). EsxA disassembles pre-formed EccC-EsxB multimers, possibly by making EccC-EsxA-EsxB trimers instead of EccC-EsxB-EsxB-EccC tetramers. The protein is ESAT-6-like protein EsxA of Thermomonospora curvata (strain ATCC 19995 / DSM 43183 / JCM 3096 / KCTC 9072 / NBRC 15933 / NCIMB 10081 / Henssen B9).